Reading from the N-terminus, the 309-residue chain is DNA-directed RNA polymerase subunit alpha (309 aa).

Residues 1 to 227 (MTFQVECVES…ALFEPLKNVS (227 aa)) are alpha N-terminal domain (alpha-NTD). The segment at 237-309 (EPTPESQTPI…GIKLQESKVS (73 aa)) is alpha C-terminal domain (alpha-CTD).

Belongs to the RNA polymerase alpha chain family. In cyanobacteria the RNAP catalytic core is composed of 2 alpha, 1 beta, 1 beta', 1 gamma and 1 omega subunit. When a sigma factor is associated with the core the holoenzyme is formed, which can initiate transcription.

It catalyses the reaction RNA(n) + a ribonucleoside 5'-triphosphate = RNA(n+1) + diphosphate. Functionally, DNA-dependent RNA polymerase catalyzes the transcription of DNA into RNA using the four ribonucleoside triphosphates as substrates. The sequence is that of DNA-directed RNA polymerase subunit alpha from Synechococcus elongatus (strain ATCC 33912 / PCC 7942 / FACHB-805) (Anacystis nidulans R2).